A 372-amino-acid chain; its full sequence is N-methyl-L-tryptophan oxidase (372 aa).

4–34 (DLIIIGSGSVGAAAGYYATRAGLNVLMTDAH) contributes to the FAD binding site. The residue at position 308 (C308) is an S-8alpha-FAD cysteine.

This sequence belongs to the MSOX/MTOX family. MTOX subfamily. As to quaternary structure, monomer. Requires FAD as cofactor.

It catalyses the reaction N(alpha)-methyl-L-tryptophan + O2 + H2O = L-tryptophan + formaldehyde + H2O2. Its function is as follows. Catalyzes the oxidative demethylation of N-methyl-L-tryptophan. This Escherichia coli O6:H1 (strain CFT073 / ATCC 700928 / UPEC) protein is N-methyl-L-tryptophan oxidase.